Reading from the N-terminus, the 3401-residue chain is Genome polyprotein (3401 aa).

Residues 1–104 (MPVRPRNKPK…GRKKRRSMTH (104 aa)) lie on the Cytoplasmic side of the membrane. Residues 101 to 117 (SMTHGIILSLGVTMVIG) constitute a propeptide, ER anchor for the capsid protein C, removed in mature form by serine protease NS3. The chain crosses the membrane as a helical span at residues 105–125 (GIILSLGVTMVIGASLHHHGG). Residues 126-240 (RYLLNVTHAD…GERQIQRIER (115 aa)) lie on the Extracellular side of the membrane. 2 N-linked (GlcNAc...) asparagine; by host glycosylation sites follow: Asn130 and Asn146. Residues 241–261 (WMMRNPFYAAISLLLAWWVGS) form a helical membrane-spanning segment. At 262–266 (DIKQK) the chain is on the cytoplasmic side. A helical transmembrane segment spans residues 267–281 (VLIAFLVLAIGPAYS). Over 282-725 (THCVGIPKRD…HTVFGNVFHS (444 aa)) the chain is Extracellular. Disulfide bonds link Cys284-Cys311, Cys355-Cys386, Cys373-Cys397, Cys462-Cys564, and Cys581-Cys611. Residues 379–392 (DRGWGNGCGLFGKG) are fusion peptide. Residues 726–746 (IFGGLSWITKIILGGMFLWLG) traverse the membrane as a helical segment. Residues 747-753 (VNSRNQT) lie on the Extracellular side of the membrane. A helical membrane pass occupies residues 754-774 (MCMVLMAVGGILLFMTLGVSG). Residues 775-1122 (EVGCSLDIKR…NVHEEHLVRS (348 aa)) lie on the Extracellular side of the membrane. Disulfide bonds link Cys778–Cys789, Cys829–Cys916, Cys952–Cys997, Cys1054–Cys1103, Cys1065–Cys1087, and Cys1086–Cys1090. N-linked (GlcNAc...) asparagine; by host glycans are attached at residues Asn904 and Asn981. A helical transmembrane segment spans residues 1123–1143 (WASAGTGMAESSLGLVALFLF). Over 1144 to 1198 (TDIFARKRMTRKFMVIGCLGVLSVMIVGGFTALDLIRYIIVVGQHFASMNHGGDV) the chain is Cytoplasmic. Residues 1199–1219 (AYLAIIAVGKLRPGLLMMYSF) form a helical membrane-spanning segment. Residues 1220–1287 (KAAWSPKERV…PILALLTPLS (68 aa)) are Lumenal-facing. Residues 1288–1308 (MEIIRKTGIFACVGLLGLSLW) traverse the membrane as a helical segment. The Cytoplasmic segment spans residues 1309-1352 (RGGDTTMRKGMPLLAGAATAASGLTRASLSVVFILCATAASRRS). The helical transmembrane segment at 1353–1373 (WPIGEIMAIVGIVGTGFGMAV) threads the bilayer. The Lumenal segment spans residues 1374 to 1376 (NDQ). Residues 1377–1397 (ASLAGPMLVFGLIMIVYATLG) traverse the membrane as a helical segment. At 1398–1447 (RADGLTLKRVGDITWEEEAVHSGSSTRYDVTLNEAGEFKLVHEEPVVWSH) the chain is on the cytoplasmic side. The interacts with and activates NS3 protease stretch occupies residues 1404–1443 (LKRVGDITWEEEAVHSGSSTRYDVTLNEAGEFKLVHEEPV). The segment at residues 1448 to 1468 (VVFLVVALIAASVHPIALVVV) is an intramembrane region (helical). Residues 1469-2154 (TIIWTYGKKH…ASTNAPEAVT (686 aa)) are Cytoplasmic-facing. The Peptidase S7 domain maps to 1481–1661 (GGVLWDIPIA…GGEGVTEEPL (181 aa)). Active-site charge relay system; for serine protease NS3 activity residues include His1532, Asp1556, and Ser1617. Residues 1665–1821 (ATMLRKGKLT…ESNGEIEDLR (157 aa)) enclose the Helicase ATP-binding domain. The interval 1669 to 1672 (RKGK) is important for RNA-binding. 1678–1685 (YHPGAGKT) is a binding site for ATP. The DEAH box motif lies at 1769 to 1772 (DEAH). The Helicase C-terminal domain maps to 1816–1995 (EIEDLRRDIP…GMVAPLYDVE (180 aa)). The helical transmembrane segment at 2155–2175 (ILLMTGIVVACTLGVGLAFMW) threads the bilayer. Over 2176-2181 (PKGVDK) the chain is Lumenal. An intramembrane region (helical) is located at residues 2182–2200 (MSMGMITMSIAGYLMLQGG). Residue Leu2201 is a topological domain, lumenal. The chain crosses the membrane as a helical span at residues 2202 to 2222 (TPVQVASVLLIFFIFMVVLIP). Over 2223–2235 (EAGTQRSINDNKT) the chain is Cytoplasmic. A helical membrane pass occupies residues 2236-2250 (LYVLLGVALLIGAIT). Topologically, residues 2251 to 2285 (ANEMGYLEKTKRDLLGERVQNEWKLELPMFDLRPG) are cytoplasmic. The segment at residues 2286 to 2306 (AAWSIYVGLATLVMPVLDHWI) is an intramembrane region (helical). At 2307-2354 (RTEYGSLSLTGIAQQASILQAMDKGVPFFKLNMSVIVLLVSVWNNFSM) the chain is on the lumenal side. A helical transmembrane segment spans residues 2355 to 2375 (LSVLCGVGLLGVHCAFVLPGL). Residues 2376-2418 (RAQAAKQAQRRVYHGVAKNPVVDGQTTAEIETAPEMPPLYEKK) are Cytoplasmic-facing. The helical transmembrane segment at 2419–2439 (LALVLLGVVAIANGVMVRSAF) threads the bilayer. At 2440-2467 (SMAETVVLLSAAVGPLLEGNTSAIWNGP) the chain is on the lumenal side. A helical transmembrane segment spans residues 2468–2488 (MAVAMAGIMRGNYYAGIGLAY). Topologically, residues 2489–3401 (NLWILQSPKR…YSVQEVGTVL (913 aa)) are cytoplasmic. In terms of domain architecture, mRNA cap 0-1 NS5-type MT spans 2499 to 2763 (GRSTTMTLGE…DVVFPTGTRN (265 aa)). Ser2554 lines the S-adenosyl-L-methionine pocket. At Ser2554 the chain carries Phosphoserine. The For 2'-O-MTase activity role is filled by Lys2559. S-adenosyl-L-methionine is bound by residues Gly2584, Trp2585, Thr2602, Leu2603, Asp2629, and Val2630. Asp2644 acts as the For 2'-O-MTase activity in catalysis. Ile2645 is a binding site for S-adenosyl-L-methionine. Active-site for 2'-O-MTase activity residues include Lys2680 and Glu2716. Tyr2718 is an S-adenosyl-L-methionine binding site. The short motif at 2869–2902 (RAIMEVVNKWMFDFLAREKAPRICTKEEFINKVR) is the Nuclear localization signal element. Residues Glu2936, His2940, Cys2945, and Cys2948 each contribute to the Zn(2+) site. Residues 3026–3178 (GIMYADDTAG…APLDERFGLA (153 aa)) form the RdRp catalytic domain. His3213, Cys3229, and Cys3348 together coordinate Zn(2+).

This sequence in the N-terminal section; belongs to the class I-like SAM-binding methyltransferase superfamily. mRNA cap 0-1 NS5-type methyltransferase family. As to quaternary structure, homodimer. Interacts (via N-terminus) with host EXOC1 (via C-terminus); this interaction results in EXOC1 degradation through the proteasome degradation pathway. Forms heterodimers with envelope protein E in the endoplasmic reticulum and Golgi. In terms of assembly, homodimer; in the endoplasmic reticulum and Golgi. Interacts with protein prM. Interacts with non-structural protein 1. As to quaternary structure, homodimer; Homohexamer when secreted. Interacts with envelope protein E. NS1 interacts with NS4B. Interacts with host complement protein CFH; this interaction leads to the degradation of C3. Interacts (via N-terminus) with serine protease NS3. In terms of assembly, forms a heterodimer with serine protease NS3. May form homooligomers. As to quaternary structure, forms a heterodimer with NS2B. Interacts with non-structural protein 2A (via N-terminus). Interacts with NS4B. Interacts with unphosphorylated RNA-directed RNA polymerase NS5; this interaction stimulates RNA-directed RNA polymerase NS5 guanylyltransferase activity. NS3 interacts with host PDCD6IP; this interaction contributes to virion release. Interacts with serine protease NS3. In terms of assembly, homodimer. Interacts with host STAT2; this interaction prevents the establishment of cellular antiviral state. Interacts with serine protease NS3. Interacts with host TRIM23; this interaction leads to NS5 ubiquitination. In terms of processing, specific enzymatic cleavages in vivo yield mature proteins. The nascent capsid protein C contains a C-terminal hydrophobic domain that act as a signal sequence for translocation of prM into the lumen of the ER. Mature capsid protein C is cleaved at a site upstream of this hydrophobic domain by NS3. prM is cleaved in post-Golgi vesicles by a host furin, releasing the mature small envelope protein M, and peptide pr. Non-structural protein 2A-alpha, a C-terminally truncated form of non-structural protein 2A, results from partial cleavage by NS3. Specific enzymatic cleavages in vivo yield mature proteins peptide 2K acts as a signal sequence and is removed from the N-terminus of NS4B by the host signal peptidase in the ER lumen. Signal cleavage at the 2K-4B site requires a prior NS3 protease-mediated cleavage at the 4A-2K site. Post-translationally, cleaved in post-Golgi vesicles by a host furin, releasing the mature small envelope protein M, and peptide pr. This cleavage is incomplete as up to 30% of viral particles still carry uncleaved prM. N-glycosylated. In terms of processing, N-glycosylated. The excreted form is glycosylated and this is required for efficient secretion of the protein from infected cells. Post-translationally, polyubiquitinated; ubiquitination is probably mediated by host TRIM23 and is prerequisite for NS5-STAT2 interaction. NS5 is not ISGylated or sumoylated. Phosphorylated on serines residues. This phosphorylation may trigger NS5 nuclear localization.

The protein localises to the virion. It is found in the host nucleus. It localises to the host cytoplasm. The protein resides in the host perinuclear region. Its subcellular location is the virion membrane. The protein localises to the host endoplasmic reticulum membrane. It is found in the secreted. It carries out the reaction Selective hydrolysis of -Xaa-Xaa-|-Yaa- bonds in which each of the Xaa can be either Arg or Lys and Yaa can be either Ser or Ala.. The catalysed reaction is RNA(n) + a ribonucleoside 5'-triphosphate = RNA(n+1) + diphosphate. It catalyses the reaction a ribonucleoside 5'-triphosphate + H2O = a ribonucleoside 5'-diphosphate + phosphate + H(+). The enzyme catalyses ATP + H2O = ADP + phosphate + H(+). It carries out the reaction a 5'-end (5'-triphosphoguanosine)-ribonucleoside in mRNA + S-adenosyl-L-methionine = a 5'-end (N(7)-methyl 5'-triphosphoguanosine)-ribonucleoside in mRNA + S-adenosyl-L-homocysteine. The catalysed reaction is a 5'-end (N(7)-methyl 5'-triphosphoguanosine)-ribonucleoside in mRNA + S-adenosyl-L-methionine = a 5'-end (N(7)-methyl 5'-triphosphoguanosine)-(2'-O-methyl-ribonucleoside) in mRNA + S-adenosyl-L-homocysteine + H(+). Its function is as follows. Plays a role in virus budding by binding to the cell membrane and gathering the viral RNA into a nucleocapsid that forms the core of a mature virus particle. During virus entry, may induce genome penetration into the host cytoplasm after hemifusion induced by the surface proteins. Can migrate to the cell nucleus where it modulates host functions. Inhibits RNA silencing by interfering with host Dicer. Functionally, prevents premature fusion activity of envelope proteins in trans-Golgi by binding to envelope protein E at pH6.0. After virion release in extracellular space, gets dissociated from E dimers. In terms of biological role, acts as a chaperone for envelope protein E during intracellular virion assembly by masking and inactivating envelope protein E fusion peptide. prM is the only viral peptide matured by host furin in the trans-Golgi network probably to avoid catastrophic activation of the viral fusion activity in acidic Golgi compartment prior to virion release. prM-E cleavage is inefficient, and many virions are only partially matured. These uncleaved prM would play a role in immune evasion. Its function is as follows. May play a role in virus budding. Exerts cytotoxic effects by activating a mitochondrial apoptotic pathway through M ectodomain. May display a viroporin activity. Binds to host cell surface receptor and mediates fusion between viral and cellular membranes. Envelope protein is synthesized in the endoplasmic reticulum in the form of heterodimer with protein prM. They play a role in virion budding in the ER, and the newly formed immature particle is covered with 60 spikes composed of heterodimer between precursor prM and envelope protein E. The virion is transported to the Golgi apparatus where the low pH causes dissociation of PrM-E heterodimers and formation of E homodimers. prM-E cleavage is inefficient, and many virions are only partially matured. These uncleaved prM would play a role in immune evasion. Functionally, involved in immune evasion, pathogenesis and viral replication. Once cleaved off the polyprotein, is targeted to three destinations: the viral replication cycle, the plasma membrane and the extracellular compartment. Essential for viral replication. Required for formation of the replication complex and recruitment of other non-structural proteins to the ER-derived membrane structures. Excreted as a hexameric lipoparticle that plays a role against host immune response. Antagonizing the complement function. Binds to the host macrophages and dendritic cells. Inhibits signal transduction originating from Toll-like receptor 3 (TLR3). In terms of biological role, component of the viral RNA replication complex that functions in virion assembly and antagonizes the host immune response. Its function is as follows. Required cofactor for the serine protease function of NS3. May have membrane-destabilizing activity and form viroporins. Displays three enzymatic activities: serine protease, NTPase and RNA helicase. NS3 serine protease, in association with NS2B, performs its autocleavage and cleaves the polyprotein at dibasic sites in the cytoplasm: C-prM, NS2A-NS2B, NS2B-NS3, NS3-NS4A, NS4A-2K and NS4B-NS5. NS3 RNA helicase binds RNA and unwinds dsRNA in the 3' to 5' direction. Also plays a role in virus assembly. Functionally, regulates the ATPase activity of the NS3 helicase activity. NS4A allows NS3 helicase to conserve energy during unwinding. In terms of biological role, functions as a signal peptide for NS4B and is required for the interferon antagonism activity of the latter. Its function is as follows. Induces the formation of ER-derived membrane vesicles where the viral replication takes place. Inhibits interferon (IFN)-induced host STAT1 phosphorylation and nuclear translocation, thereby preventing the establishment of cellular antiviral state by blocking the IFN-alpha/beta pathway. Replicates the viral (+) and (-) RNA genome, and performs the capping of genomes in the cytoplasm. NS5 methylates viral RNA cap at guanine N-7 and ribose 2'-O positions. Besides its role in RNA genome replication, also prevents the establishment of cellular antiviral state by blocking the interferon-alpha/beta (IFN-alpha/beta) signaling pathway. IFN-I induces binding of NS5 to host IFN-activated transcription factor STAT2, preventing its transcriptional activity. Host TRIM23 is the E3 ligase that interacts with and polyubiquitinates NS5 to promote its binding to STAT2 and trigger IFN-I signaling inhibition. The protein is Genome polyprotein of Edge Hill virus (EHV).